The chain runs to 1824 residues: Afadin (1824 aa).

The 95-residue stretch at 39–133 (FHGVMRFYFQ…GRFVLKNEND (95 aa)) folds into the Ras-associating 1 domain. A disordered region spans residues 128–194 (LKNENDAIPP…DRPFQGEDVE (67 aa)). Positions 146 to 185 (EKQEKEGVIQNFKRTLSKKEKKEKKKREKEALRQASDKDD) form a coiled coil. Basic residues predominate over residues 160-172 (TLSKKEKKEKKKR). A compositionally biased stretch (basic and acidic residues) spans 173–189 (EKEALRQASDKDDRPFQ). 3 positions are modified to phosphoserine: Ser-216, Ser-246, and Ser-256. In terms of domain architecture, Ras-associating 2 spans 246–348 (SGGTLRIYAD…LVFQLKRRPP (103 aa)). A compositionally biased stretch (basic and acidic residues) spans 349–371 (DHIPKKTKKHLEGKTPKGKERAD). The disordered stretch occupies residues 349 to 378 (DHIPKKTKKHLEGKTPKGKERADGSGYGST). A phosphoserine mark is found at Ser-391 and Ser-424. Residues 426–492 (TEVGTEKLDD…LQSGMKVQFG (67 aa)) form the FHA domain. Ser-512, Ser-557, Ser-562, Ser-589, and Ser-655 each carry phosphoserine. Residues 534–595 (FDLGGDIHSG…RQESRTQDAS (62 aa)) are disordered. The span at 580–591 (QQPDYRRQESRT) shows a compositional bias: basic and acidic residues. The Dilute domain occupies 668–908 (NKMVSMMEGV…IENVVTVAEN (241 aa)). The PDZ domain maps to 1007–1093 (IITVTLKKQN…VVTLEVAKQG (87 aa)). 9 positions are modified to phosphoserine: Ser-1083, Ser-1107, Ser-1126, Ser-1140, Ser-1143, Ser-1172, Ser-1173, Ser-1182, and Ser-1199. The segment at 1107 to 1223 (SPMMQRISDR…PRPEAYPIPT (117 aa)) is disordered. Basic and acidic residues predominate over residues 1113–1128 (ISDRRGSGKPRPKSEG). The span at 1132–1143 (YNNSTQNGSPES) shows a compositional bias: polar residues. The segment covering 1152 to 1172 (SEPKKLPGDDRLMKNRADHRS) has biased composition (basic and acidic residues). The span at 1190–1210 (ASGTTAKITSVSTGNLCTEEQ) shows a compositional bias: polar residues. Residues Thr-1211 and Thr-1232 each carry the phosphothreonine modification. 3 disordered regions span residues 1235–1473 (ASKS…LQRP), 1501–1528 (SKEE…EKQQ), and 1569–1824 (RLQE…LNTK). Phosphoserine is present on Ser-1238. Basic and acidic residues-rich tracts occupy residues 1252–1262 (YEEKPHMHTDS) and 1274–1302 (RSQE…KSDS). The residue at position 1275 (Ser-1275) is a Phosphoserine. Residues 1309–1318 (SSSLDSSTSS) show a composition bias toward low complexity. Polar residues predominate over residues 1325–1337 (SSKSVTPASTLTK). The residue at position 1328 (Ser-1328) is a Phosphoserine. Thr-1330 is modified (phosphothreonine). Positions 1345-1356 (TPAAIPATPVAV) are enriched in low complexity. Pro residues predominate over residues 1364–1373 (LPPPPPPPPV). Basic and acidic residues predominate over residues 1407–1441 (AERRKREEHQRWYEKEKARLEEERERKRREQERKL). Residues 1408–1448 (ERRKREEHQRWYEKEKARLEEERERKRREQERKLGQMRTQS) are a coiled coil. Phosphoserine is present on residues Ser-1501 and Ser-1512. The span at 1515 to 1528 (PWKRDAKEKLEKQQ) shows a compositional bias: basic and acidic residues. The stretch at 1523-1667 (KLEKQQQMHI…SRLEAERRRQ (145 aa)) forms a coiled coil. Acidic residues predominate over residues 1578–1589 (EDDEEEEDDDVD). A compositionally biased stretch (basic and acidic residues) spans 1597–1677 (LEAERRARLQ…HDEAARRLLE (81 aa)). Pro residues predominate over residues 1694-1709 (PPSPSPAPGAPPPPPQ). Ser-1696, Ser-1721, Ser-1774, Ser-1779, and Ser-1799 each carry phosphoserine. Basic and acidic residues predominate over residues 1762 to 1776 (DACRDAKEKRSKSQD). At Lys-1807 the chain carries N6-acetyllysine. Basic and acidic residues predominate over residues 1813–1824 (KLTELENELNTK).

In terms of assembly, homodimer. Interacts with F-actin, nectin and NECTIN3. Essential for the association of nectin and E-cadherin. Isoform 1/s-afadin does not interact with F-actin. Interacts with ZO-1 and occludin, but probably in an indirect manner. Interacts with RIT1 and RIT2. Interacts with NRXN1 and BCR. Interacts with ADAM10; the interaction locks ADAM10 at adherens junctions following ADAM10 recruitment to adherens junctions by TSPAN33.

Its subcellular location is the cell junction. The protein localises to the adherens junction. Belongs to an adhesion system, probably together with the E-cadherin-catenin system, which plays a role in the organization of homotypic, interneuronal and heterotypic cell-cell adherens junctions (AJs). Nectin- and actin-filament-binding protein that connects nectin to the actin cytoskeleton. May play a key role in the organization of epithelial structures of the embryonic ectoderm. Essential for the organization of adherens junctions. This is Afadin from Homo sapiens (Human).